The chain runs to 214 residues: N-(5'-phosphoribosyl)anthranilate isomerase (214 aa).

It belongs to the TrpF family.

The catalysed reaction is N-(5-phospho-beta-D-ribosyl)anthranilate = 1-(2-carboxyphenylamino)-1-deoxy-D-ribulose 5-phosphate. The protein operates within amino-acid biosynthesis; L-tryptophan biosynthesis; L-tryptophan from chorismate: step 3/5. The chain is N-(5'-phosphoribosyl)anthranilate isomerase from Rhodospirillum centenum (strain ATCC 51521 / SW).